A 476-amino-acid polypeptide reads, in one-letter code: tRNA(Ile)-lysidine synthase (476 aa).

Residue 30–35 coordinates ATP; it reads SGGPDS.

The protein belongs to the tRNA(Ile)-lysidine synthase family.

The protein localises to the cytoplasm. It catalyses the reaction cytidine(34) in tRNA(Ile2) + L-lysine + ATP = lysidine(34) in tRNA(Ile2) + AMP + diphosphate + H(+). Functionally, ligates lysine onto the cytidine present at position 34 of the AUA codon-specific tRNA(Ile) that contains the anticodon CAU, in an ATP-dependent manner. Cytidine is converted to lysidine, thus changing the amino acid specificity of the tRNA from methionine to isoleucine. This Bacillus anthracis protein is tRNA(Ile)-lysidine synthase.